Consider the following 236-residue polypeptide: Purine nucleoside phosphorylase DeoD-type (236 aa).

An a purine D-ribonucleoside-binding site is contributed by H5. Phosphate-binding positions include G21, R25, R44, and 88–91 (RVGT). Residues 180-182 (EME) and 204-205 (SD) each bind a purine D-ribonucleoside. Catalysis depends on D205, which acts as the Proton donor.

This sequence belongs to the PNP/UDP phosphorylase family. In terms of assembly, homohexamer; trimer of homodimers.

The catalysed reaction is a purine D-ribonucleoside + phosphate = a purine nucleobase + alpha-D-ribose 1-phosphate. It catalyses the reaction a purine 2'-deoxy-D-ribonucleoside + phosphate = a purine nucleobase + 2-deoxy-alpha-D-ribose 1-phosphate. In terms of biological role, catalyzes the reversible phosphorolytic breakdown of the N-glycosidic bond in the beta-(deoxy)ribonucleoside molecules, with the formation of the corresponding free purine bases and pentose-1-phosphate. This Shewanella sp. (strain MR-4) protein is Purine nucleoside phosphorylase DeoD-type.